The chain runs to 303 residues: Esterase (303 aa).

The Involved in the stabilization of the negatively charged intermediate by the formation of the oxyanion hole motif lies at 79–81; sequence HGG. Residues S149 and E244 contribute to the active site.

Belongs to the 'GDXG' lipolytic enzyme family.

The protein localises to the secreted. This is Esterase (est) from Acinetobacter venetianus (strain ATCC 31012 / DSM 23050 / BCRC 14357 / CCUG 45561 / CIP 110063 / KCTC 2702 / LMG 19082 / RAG-1).